The sequence spans 135 residues: Probable transcription factor At2g20613 (135 aa).

Residues 1 to 104 are disordered; sequence MSHKRFNPLT…KRGGGGGEEA (104 aa). Residues 28-41 show a composition bias toward acidic residues; that stretch reads DSSSDEETDSDSDS. Residues 62-80 show a composition bias toward basic and acidic residues; the sequence is KSVKISEKSVAKRSRETHE.

The protein belongs to the GeBP family.

The sequence is that of Probable transcription factor At2g20613 from Arabidopsis thaliana (Mouse-ear cress).